A 233-amino-acid polypeptide reads, in one-letter code: Antiholin-like protein LrgB (233 aa).

7 helical membrane-spanning segments follow: residues 7–27, 33–53, 63–83, 97–117, 124–144, 152–172, and 212–232; these read INTP…ATFL, GFFL…FLKL, IGGD…AIPL, ILGG…LIAE, GIIA…PVSA, LTSL…SKLI, and ISLV…ATLL.

The protein belongs to the CidB/LrgB family. LrgB subfamily.

The protein localises to the cell membrane. Functionally, inhibits the expression or activity of extracellular murein hydrolases by interacting, possibly with LrgA, with the holin-like proteins CidA and/or CidB. The LrgAB and CidAB proteins may affect the proton motive force of the membrane. May be involved in programmed cell death (PCD), possibly triggering PCD in response to antibiotics and environmental stresses. The sequence is that of Antiholin-like protein LrgB from Staphylococcus saprophyticus subsp. saprophyticus (strain ATCC 15305 / DSM 20229 / NCIMB 8711 / NCTC 7292 / S-41).